A 368-amino-acid polypeptide reads, in one-letter code: Putative zinc metalloprotease Cj1068 (368 aa).

Position 36 (His-36) interacts with Zn(2+). Glu-37 is a catalytic residue. Position 40 (His-40) interacts with Zn(2+). The next 3 membrane-spanning stretches (helical) occupy residues 112-134 (IYIL…IIIG), 291-313 (FTLL…LLPI), and 338-360 (TFEY…ATYN). A PDZ domain is found at 126-197 (AFFLYIIIGN…LKILINREGK (72 aa)).

This sequence belongs to the peptidase M50B family. Zn(2+) serves as cofactor.

Its subcellular location is the cell inner membrane. This is Putative zinc metalloprotease Cj1068 from Campylobacter jejuni subsp. jejuni serotype O:2 (strain ATCC 700819 / NCTC 11168).